Reading from the N-terminus, the 412-residue chain is Glutamyl-tRNA reductase (412 aa).

Substrate contacts are provided by residues 52–55 (TCNR), S108, 113–115 (EYE), and Q119. C53 functions as the Nucleophile in the catalytic mechanism. 189 to 194 (GAGEIG) serves as a coordination point for NADP(+).

The protein belongs to the glutamyl-tRNA reductase family. In terms of assembly, homodimer.

The enzyme catalyses (S)-4-amino-5-oxopentanoate + tRNA(Glu) + NADP(+) = L-glutamyl-tRNA(Glu) + NADPH + H(+). It participates in porphyrin-containing compound metabolism; protoporphyrin-IX biosynthesis; 5-aminolevulinate from L-glutamyl-tRNA(Glu): step 1/2. In terms of biological role, catalyzes the NADPH-dependent reduction of glutamyl-tRNA(Glu) to glutamate 1-semialdehyde (GSA). The chain is Glutamyl-tRNA reductase from Sulfurisphaera tokodaii (strain DSM 16993 / JCM 10545 / NBRC 100140 / 7) (Sulfolobus tokodaii).